The primary structure comprises 67 residues: Bombesin (67 aa).

Positions 1-30 (MSLLPAVKVLPLGYLGIVLVFSLILRSAMV) are cleaved as a signal peptide. Positions 31–49 (DFIQDAGKLERIDTYKREA) are excised as a propeptide. Position 50 is a pyrrolidone carboxylic acid (glutamine 50). A Methionine amide modification is found at methionine 64.

It belongs to the bombesin/neuromedin-B/ranatensin family. As to expression, expressed by the skin dorsal glands.

The protein localises to the secreted. Its function is as follows. Stimulates smooth muscle contraction in isolated rat stomach strip. The polypeptide is Bombesin (Sanguirana varians (Palawan frog)).